The primary structure comprises 473 residues: SHC-transforming protein 1 (473 aa).

Residues 1-26 (MNKLSGGGGRRTRVEGGQLGGEEWTR) form a disordered region. Phosphoserine is present on Ser-29. An N6-acetyllysine modification is found at Lys-44. One can recognise a PID domain in the interval 46-229 (MGPGVSYLVR…AGFDGSAWDE (184 aa)). The disordered stretch occupies residues 216 to 314 (HDRMAGFDGS…PSSGRELFDD (99 aa)). A CH1 region spans residues 230–377 (EEEEPPDHQY…AMAEQLRGEP (148 aa)). Residues Tyr-239, Tyr-240, and Tyr-317 each carry the phosphotyrosine modification. A disordered region spans residues 328 to 348 (QAGAGAGPPNPTINGSAPRDL). Residue Ser-343 is modified to Phosphoserine. One can recognise an SH2 domain in the interval 378-469 (WFHGKLSRRE…GSELCLQQPV (92 aa)).

Interacts with CPNE3; this interaction may mediate the binding of CPNE3 with ERBB2. Interacts with the Trk receptors NTRK1, NTRK2 and NTRK3; in a phosphotyrosine-dependent manner. Interacts with the NPXY motif of tyrosine-phosphorylated IGF1R and INSR in vitro via the PID domain. Once activated, binds to GRB2. Interacts with tyrosine-phosphorylated CD3T and DDR2. Interacts with the N-terminal region of APS. Interacts with phosphorylated LRP1 and IRS4. Interacts with INPP5D/SHIP1 and INPPL1/SHIP2. Interacts with ALK, GAB2, GRB7 and KIT. Interacts with PTPN6/SHP (tyrosine phosphorylated). Identified in a complex containing FGFR4, NCAM1, CDH2, PLCG1, FRS2, SRC, SHC1, GAP43 and CTTN. Interacts with FLT4 (tyrosine-phosphorylated). Interacts with EPHB1 and GRB2; activates the MAPK/ERK cascade to regulate cell migration. Interacts with PDGFRB (tyrosine-phosphorylated). Interacts with ERBB4. Interacts with TEK/TIE2 (tyrosine-phosphorylated). Interacts with PTK2/FAK1. Interacts with CEACAM1; this interaction is CEACAM1-phosphorylation-dependent and mediates interaction with EGFR or INSR resulting in decrease coupling of SHC1 to the MAPK3/ERK1-MAPK1/ERK2 pathway. Interacts (via PID domain) with PEAK1 (when phosphorylated). Found in a complex with PPP1CA, PPP1CC, SHC1 and PEAK1. Phosphorylated by activated epidermal growth factor receptor. Phosphorylated in response to KIT signaling. Tyrosine phosphorylated in response to FLT3 and FLT4 signaling and by ligand-activated ALK. Tyrosine phosphorylated by ligand-activated PDGFRB. Tyrosine phosphorylated by TEK/TIE2. May be tyrosine phosphorylated by activated PTK2/FAK1. Tyrosine phosphorylated by activated PTK2B/PYK2. Dephosphorylation by PTPN2 may regulate interaction with GRB2.

The protein resides in the cytoplasm. It localises to the cell junction. The protein localises to the focal adhesion. Functionally, signaling adapter that couples activated growth factor receptors to signaling pathways. Participates in a signaling cascade initiated by activated KIT and KITLG/SCF. Participates in signaling downstream of the angiopoietin receptor TEK/TIE2, and plays a role in the regulation of endothelial cell migration and sprouting angiogenesis. In Bos taurus (Bovine), this protein is SHC-transforming protein 1 (SHC1).